Consider the following 80-residue polypeptide: Exodeoxyribonuclease 7 small subunit (80 aa).

It belongs to the XseB family. As to quaternary structure, heterooligomer composed of large and small subunits.

The protein localises to the cytoplasm. The enzyme catalyses Exonucleolytic cleavage in either 5'- to 3'- or 3'- to 5'-direction to yield nucleoside 5'-phosphates.. Functionally, bidirectionally degrades single-stranded DNA into large acid-insoluble oligonucleotides, which are then degraded further into small acid-soluble oligonucleotides. The sequence is that of Exodeoxyribonuclease 7 small subunit from Cronobacter sakazakii (strain ATCC BAA-894) (Enterobacter sakazakii).